Here is a 277-residue protein sequence, read N- to C-terminus: uncharacterized protein (277 aa).

The interval 256–277 (HTTTTTTSPSFTIPSNSSKGVS) is disordered.

Its function is as follows. This protein may be involved in virus assembly. Essential for virus function. This is an uncharacterized protein from Saccharolobus solfataricus (Sulfolobus solfataricus).